The primary structure comprises 30 residues: Cycloviolacin-H1 (30 aa).

The segment at residues 1–30 (GIPCGESCVYIPCLTSAIGCSCKSKVCYRN) is a cross-link (cyclopeptide (Gly-Asn)). 3 disulfide bridges follow: Cys-4–Cys-20, Cys-8–Cys-22, and Cys-13–Cys-27.

Belongs to the cyclotide family. Bracelet subfamily. Post-translationally, this is a cyclic peptide.

Probably participates in a plant defense mechanism. The sequence is that of Cycloviolacin-H1 from Viola hederacea (Australian violet).